Reading from the N-terminus, the 960-residue chain is Testis anion transporter 1 (960 aa).

Topologically, residues 1 to 93 are cytoplasmic; it reads MQPDRSFQSF…YRFKDWLLGD (93 aa). The chain crosses the membrane as a helical span at residues 94–114; sequence LLAGISVGLVQIPQVLMLGLL. The Extracellular segment spans residues 115–117; the sequence is ARH. Residues 118–138 traverse the membrane as a helical segment; it reads LIPPLNVSYAAFCASVIYGIF. Position 139 (G139) is a topological domain, cytoplasmic. Residues 140–160 form a helical membrane-spanning segment; sequence SCHQMSIGTFFLVSALAINVL. Residues 161-201 lie on the Extracellular side of the membrane; sequence RTQPFNRGHLLLGTFIQADFSNTSFYENYNRSLSSVASVTL. N-linked (GlcNAc...) asparagine glycosylation is present at N190. A run of 2 helical transmembrane segments spans residues 202–222 and 223–243; these read LTGI…VAYI and PEAA…LSQL. Over 244 to 268 the chain is Cytoplasmic; the sequence is TCIFGIMISYNSGPIAFFYNIINYC. A helical membrane pass occupies residues 269 to 289; sequence LGLPKANSTSILLFLTAMVAL. At 290–353 the chain is on the extracellular side; sequence RINKCIRISF…PVTPDMSNLT (64 aa). Residues 354–374 form a helical membrane-spanning segment; that stretch reads EVLIESFSLALVSSSLLVFLG. The Cytoplasmic segment spans residues 375 to 390; it reads KKIASFHNYDVNSNQD. The chain crosses the membrane as a helical span at residues 391–411; it reads LIAIGLCNVVSSFFRSYVFTG. Over 412–427 the chain is Extracellular; sequence AVARTIIQDKTGGRQQ. The helical transmembrane segment at 428-448 threads the bilayer; the sequence is FASLVGAGIMLLLMMKMARFF. Over 449–453 the chain is Cytoplasmic; it reads YRLPN. Residues 454–474 traverse the membrane as a helical segment; it reads AIVAGIILSNVLPYLEAVYTL. At 475-494 the chain is on the extracellular side; the sequence is PSLWRQNQYDCLIWMVTFMS. The helical transmembrane segment at 495–515 threads the bilayer; sequence AILLGLDIGLVVAVTFAFFII. The Cytoplasmic segment spans residues 516–960; that stretch reads TVQSHRTKIL…ADTSEDALEI (445 aa). An STAS domain is found at 541–792; sequence DYREVANIPG…LTLHDAVLFA (252 aa). The interaction with RACGAP1 stretch occupies residues 662–957; the sequence is ITSSSSQRNP…TSKADTSEDA (296 aa). Disordered stretches follow at residues 807–857 and 881–960; these read ESET…EESD and EVEP…ALEI. Residues 818–827 are compositionally biased toward basic and acidic residues; the sequence is ETDKKEESRH. The span at 884–904 shows a compositional bias: acidic residues; sequence PESELEPESELDQETELEPEP. The span at 926-935 shows a compositional bias: polar residues; it reads SPTQTQARTQ.

It belongs to the SLC26A/SulP transporter (TC 2.A.53) family. As to quaternary structure, interacts with RACGAP1. Interacts with CFTR; stimulates anion transport activity of CFTR. Post-translationally, N-glycosylated.

It is found in the membrane. The catalysed reaction is sulfate(out) + chloride(in) = sulfate(in) + chloride(out). The enzyme catalyses oxalate(in) + chloride(out) = oxalate(out) + chloride(in). Antiporter that mediates the exchange of sulfate and oxalate against chloride ions across a membrane. Stimulates anion transport activity of CFTR. May cooperate with CFTR in the regulation of chloride and bicarbonate ions fluxes required for activation of the ADCY10/PKA pathway during sperm motility and sperm capacitation. May play a role in sperm tail differentiation and motility and hence male fertility. This Bos taurus (Bovine) protein is Testis anion transporter 1.